The following is a 272-amino-acid chain: DNA repair protein RecO (272 aa).

Belongs to the RecO family.

Involved in DNA repair and RecF pathway recombination. The protein is DNA repair protein RecO of Limosilactobacillus fermentum (strain NBRC 3956 / LMG 18251) (Lactobacillus fermentum).